We begin with the raw amino-acid sequence, 89 residues long: Small ribosomal subunit protein uS14 (89 aa).

This sequence belongs to the universal ribosomal protein uS14 family. Part of the 30S ribosomal subunit. Contacts proteins S3 and S10.

Binds 16S rRNA, required for the assembly of 30S particles and may also be responsible for determining the conformation of the 16S rRNA at the A site. The polypeptide is Small ribosomal subunit protein uS14 (Chlorobaculum tepidum (strain ATCC 49652 / DSM 12025 / NBRC 103806 / TLS) (Chlorobium tepidum)).